Consider the following 269-residue polypeptide: Histone doublet H2B-H2A (269 aa).

Residues 1–168 (MATQKETTRK…LAGNAARDSK (168 aa)) form a histone fold region. Positions 210-249 (RKKARKTTEKEASSPKKKAAPKKKKAASKQKKSLSDKELA) are disordered. Basic residues predominate over residues 224–241 (PKKKAAPKKKKAASKQKK).

The protein resides in the host nucleus. Its subcellular location is the host cytoplasm. It is found in the virion. Functionally, histone-like protein that is recruited to viral factories during viral replication and participates in viral DNA packaging and virion production probably by forming unstable nucleosome-like particles. May compact the viral DNA. This chain is Histone doublet H2B-H2A, found in Melbournevirus (MelV).